The sequence spans 109 residues: FK506-binding protein (109 aa).

The PPIase FKBP-type domain maps to 20–108; it reads GKEITVHYTG…IFEVELLKVY (89 aa).

The protein belongs to the FKBP-type PPIase family.

It carries out the reaction [protein]-peptidylproline (omega=180) = [protein]-peptidylproline (omega=0). Functionally, PPIases accelerate the folding of proteins. This is FK506-binding protein (fbp) from Neisseria meningitidis serogroup C.